The following is a 147-amino-acid chain: Large ribosomal subunit protein uL13 (147 aa).

A disordered region spans residues 127–147; the sequence is GPEHPHSAQQPKVLEIQGAAR.

This sequence belongs to the universal ribosomal protein uL13 family. As to quaternary structure, part of the 50S ribosomal subunit.

In terms of biological role, this protein is one of the early assembly proteins of the 50S ribosomal subunit, although it is not seen to bind rRNA by itself. It is important during the early stages of 50S assembly. The sequence is that of Large ribosomal subunit protein uL13 from Verminephrobacter eiseniae (strain EF01-2).